The sequence spans 95 residues: Small ribosomal subunit protein bS18 (95 aa).

The protein belongs to the bacterial ribosomal protein bS18 family. As to quaternary structure, part of the 30S ribosomal subunit. Forms a tight heterodimer with protein bS6.

Binds as a heterodimer with protein bS6 to the central domain of the 16S rRNA, where it helps stabilize the platform of the 30S subunit. In Rickettsia prowazekii (strain Madrid E), this protein is Small ribosomal subunit protein bS18.